The chain runs to 202 residues: MKSLQIICLLFIFVARGSCRSCEICHNVGNDCGYDYVEECHSPEDQCGKVLLEISSAPLSIRSSHRNCFSSSLCKLEHFDVNTGQETYLRGRIHCCDEKKCEGRPFPGLPLSHPNGYVCPGVLGLFSEDSSESEAACKGDETKCINIVGYRKERFPGDIAYNIKGCVSSCPELRLSNRTHEERRNDLIKVECRDAVKITPSE.

The signal sequence occupies residues 1–19; sequence MKSLQIICLLFIFVARGSC. 8 disulfides stabilise this stretch: Cys22–Cys47, Cys25–Cys32, Cys40–Cys68, Cys74–Cys95, Cys96–Cys101, Cys119–Cys144, Cys137–Cys166, and Cys170–Cys192. N-linked (GlcNAc...) asparagine glycosylation is present at Asn177.

Belongs to the CNF-like-inhibitor family. Heterodimer of subunit A and subunit B. Post-translationally, N-glycosylated. As to expression, expressed by the liver. Not expressed in esophagus, stomach, pancreas, spleen, gall bladder, small intestine, rectum, kidney, trachea, lung, testis and body fat.

The protein localises to the secreted. Its function is as follows. Inhibits the enzymatic activity of all phospholipase A2 (PA2) groups. The sequence is that of Phospholipase A2 inhibitor gamma subunit A from Elaphe quadrivirgata (Japanese four-lined ratsnake).